The chain runs to 223 residues: Deoxyribose-phosphate aldolase (223 aa).

Catalysis depends on Asp-89, which acts as the Proton donor/acceptor. Lys-152 functions as the Schiff-base intermediate with acetaldehyde in the catalytic mechanism. The active-site Proton donor/acceptor is Lys-181.

This sequence belongs to the DeoC/FbaB aldolase family. DeoC type 1 subfamily.

Its subcellular location is the cytoplasm. The catalysed reaction is 2-deoxy-D-ribose 5-phosphate = D-glyceraldehyde 3-phosphate + acetaldehyde. It participates in carbohydrate degradation; 2-deoxy-D-ribose 1-phosphate degradation; D-glyceraldehyde 3-phosphate and acetaldehyde from 2-deoxy-alpha-D-ribose 1-phosphate: step 2/2. Its function is as follows. Catalyzes a reversible aldol reaction between acetaldehyde and D-glyceraldehyde 3-phosphate to generate 2-deoxy-D-ribose 5-phosphate. This Bacillus cytotoxicus (strain DSM 22905 / CIP 110041 / 391-98 / NVH 391-98) protein is Deoxyribose-phosphate aldolase.